The chain runs to 217 residues: Adenylate kinase (217 aa).

ATP is bound at residue 10 to 15; the sequence is GAGKGT. The NMP stretch occupies residues 30–59; sequence STGDLFRANISQQTELGKLAKSYMNAGNLV. AMP contacts are provided by residues Thr31, Arg36, 57–59, 85–88, and Gln92; these read NLV and GFPR. Residues 126-164 are LID; it reads GRRVCRNEPKHVFHVTYTPPKKEGVCDVCGGELYQRDDD. ATP is bound by residues Arg127 and 137–138; that span reads VF. Positions 161 and 172 each coordinate AMP. Position 200 (Gly200) interacts with ATP.

This sequence belongs to the adenylate kinase family. As to quaternary structure, monomer.

The protein resides in the cytoplasm. It catalyses the reaction AMP + ATP = 2 ADP. Its pathway is purine metabolism; AMP biosynthesis via salvage pathway; AMP from ADP: step 1/1. Its function is as follows. Catalyzes the reversible transfer of the terminal phosphate group between ATP and AMP. Plays an important role in cellular energy homeostasis and in adenine nucleotide metabolism. The chain is Adenylate kinase from Streptomyces coelicolor (strain ATCC BAA-471 / A3(2) / M145).